The chain runs to 1291 residues: Cytoplasmic FMR1-interacting protein (1291 aa).

Positions 1269-1291 (HPSVISSSSHYQDPQKLRQSMNN) are disordered. Residues 1271-1291 (SVISSSSHYQDPQKLRQSMNN) are compositionally biased toward polar residues.

This sequence belongs to the CYFIP family. As to quaternary structure, interacts with Fmr1 and Rac1. Component of the WAVE complex composed of Hem/Kette, Scar/Wave and Cyfip where it binds through its C-terminus directly to Hem.

The protein localises to the cytoplasm. Functionally, plays a role in guidance and morphology of central and peripheral axons and in synaptic morphology. Also required for formation of cell membrane protrusions and for bristle development. The polypeptide is Cytoplasmic FMR1-interacting protein (Drosophila pseudoobscura pseudoobscura (Fruit fly)).